A 359-amino-acid chain; its full sequence is CMP-N-acetylneuraminate-poly-alpha-2,8-sialyltransferase (359 aa).

At 1 to 7 (MRSIRKR) the chain is on the cytoplasmic side. Residues 8-20 (WTICTISLLLIFY) traverse the membrane as a helical; Signal-anchor for type II membrane protein segment. The Lumenal segment spans residues 21 to 359 (KTKEIARTEE…KLTTGKCMKQ (339 aa)). N-linked (GlcNAc...) asparagine glycans are attached at residues Asn50, Asn74, and Asn119. 2 cysteine pairs are disulfide-bonded: Cys142-Cys292 and Cys156-Cys356. CMP-N-acetyl-beta-neuraminate contacts are provided by Asn147 and Asn170. 2 N-linked (GlcNAc...) asparagine glycosylation sites follow: Asn204 and Asn219. The CMP-N-acetyl-beta-neuraminate site is built by Ser279, Thr280, Gly281, and Trp301. His331 acts as the Proton donor/acceptor in catalysis.

The protein belongs to the glycosyltransferase 29 family. Autopolysialylated.

The protein resides in the golgi apparatus membrane. It localises to the secreted. The enzyme catalyses [N-acetyl-alpha-D-neuraminosyl-(2-&gt;8)](n) + CMP-N-acetyl-beta-neuraminate = [N-acetyl-alpha-D-neuraminosyl-(2-&gt;8)](n+1) + CMP + H(+). It participates in protein modification; protein glycosylation. In terms of biological role, catalyzes the transfer of a sialic acid from a CMP-linked sialic acid donor onto a terminal alpha-2,3-, alpha-2,6-, or alpha-2,8-linked sialic acid of an N-linked glycan protein acceptor through alpha-2,8-linkages. Therefore, participates in polysialic acid synthesis on various sialylated N-acetyllactosaminyl oligosaccharides, including NCAM1 N-glycans, FETUB N-glycans and AHSG. It is noteworthy that alpha-2,3-linked sialic acid is apparently a better acceptor than alpha-2,6-linked sialic acid. The chain is CMP-N-acetylneuraminate-poly-alpha-2,8-sialyltransferase from Cricetulus griseus (Chinese hamster).